Reading from the N-terminus, the 123-residue chain is Holo-[acyl-carrier-protein] synthase (123 aa).

Mg(2+) is bound by residues Asp8 and Glu50.

The protein belongs to the P-Pant transferase superfamily. AcpS family. Requires Mg(2+) as cofactor.

Its subcellular location is the cytoplasm. The enzyme catalyses apo-[ACP] + CoA = holo-[ACP] + adenosine 3',5'-bisphosphate + H(+). Functionally, transfers the 4'-phosphopantetheine moiety from coenzyme A to a Ser of acyl-carrier-protein. In Kocuria rhizophila (strain ATCC 9341 / DSM 348 / NBRC 103217 / DC2201), this protein is Holo-[acyl-carrier-protein] synthase.